We begin with the raw amino-acid sequence, 353 residues long: MEPSPDVPLEEITWHSPQHVQMMGGFLHSNNILFYFAESPFFDPTSNNASLALQAMHNENLRPFIETRGAFEGRLKTMQGLEFIVAHDPLLEAAAANAAAVARGEQPKEASNVWVIRKQMRRRSAAMGGQDDVQVLATYFVVGDSVFMAPSVWSVVGRRMLSTVTSLTKVLSTASALLTFSPSYGHSYLPHVPKSLEPTQLGQQSAQQSKETTPMPDMSGDKTTSRSALADASTTTLNASALQDARDFAETLNLLARYGNEYIDETPLAGEPGSFIFTKASASAAEQLSVAGAGAQASRQNIRSGATTPVPFGAGRPASVQPDSTKGKAADRPPAATKDKGKKRKSKIGSMSQ.

Disordered stretches follow at residues 193–231 (PKSL…ALAD) and 296–353 (QASR…SMSQ). 2 stretches are compositionally biased toward polar residues: residues 197 to 212 (EPTQ…SKET) and 297 to 307 (ASRQNIRSGAT).

It belongs to the Mediator complex subunit 6 family. Component of the Mediator complex.

The protein resides in the nucleus. In terms of biological role, component of the Mediator complex, a coactivator involved in the regulated transcription of nearly all RNA polymerase II-dependent genes. Mediator functions as a bridge to convey information from gene-specific regulatory proteins to the basal RNA polymerase II transcription machinery. Mediator is recruited to promoters by direct interactions with regulatory proteins and serves as a scaffold for the assembly of a functional preinitiation complex with RNA polymerase II and the general transcription factors. This Coccidioides immitis (strain RS) (Valley fever fungus) protein is Mediator of RNA polymerase II transcription subunit 6 (MED6).